The sequence spans 286 residues: Release factor glutamine methyltransferase (286 aa).

S-adenosyl-L-methionine contacts are provided by D136 and N179. 179 to 182 (NPPY) lines the substrate pocket.

This sequence belongs to the protein N5-glutamine methyltransferase family. PrmC subfamily.

The catalysed reaction is L-glutaminyl-[peptide chain release factor] + S-adenosyl-L-methionine = N(5)-methyl-L-glutaminyl-[peptide chain release factor] + S-adenosyl-L-homocysteine + H(+). Methylates the class 1 translation termination release factors RF1/PrfA and RF2/PrfB on the glutamine residue of the universally conserved GGQ motif. The protein is Release factor glutamine methyltransferase of Borreliella burgdorferi (strain ATCC 35210 / DSM 4680 / CIP 102532 / B31) (Borrelia burgdorferi).